Consider the following 362-residue polypeptide: UDP-N-acetylglucosamine--N-acetylmuramyl-(pentapeptide) pyrophosphoryl-undecaprenol N-acetylglucosamine transferase (362 aa).

Residues 15 to 17, N127, R165, S191, I247, 266 to 271, and Q292 contribute to the UDP-N-acetyl-alpha-D-glucosamine site; these read TGG and ALTVSE.

This sequence belongs to the glycosyltransferase 28 family. MurG subfamily.

The protein resides in the cell inner membrane. The catalysed reaction is di-trans,octa-cis-undecaprenyl diphospho-N-acetyl-alpha-D-muramoyl-L-alanyl-D-glutamyl-meso-2,6-diaminopimeloyl-D-alanyl-D-alanine + UDP-N-acetyl-alpha-D-glucosamine = di-trans,octa-cis-undecaprenyl diphospho-[N-acetyl-alpha-D-glucosaminyl-(1-&gt;4)]-N-acetyl-alpha-D-muramoyl-L-alanyl-D-glutamyl-meso-2,6-diaminopimeloyl-D-alanyl-D-alanine + UDP + H(+). It participates in cell wall biogenesis; peptidoglycan biosynthesis. Its function is as follows. Cell wall formation. Catalyzes the transfer of a GlcNAc subunit on undecaprenyl-pyrophosphoryl-MurNAc-pentapeptide (lipid intermediate I) to form undecaprenyl-pyrophosphoryl-MurNAc-(pentapeptide)GlcNAc (lipid intermediate II). The polypeptide is UDP-N-acetylglucosamine--N-acetylmuramyl-(pentapeptide) pyrophosphoryl-undecaprenol N-acetylglucosamine transferase (Shewanella baltica (strain OS185)).